The following is a 523-amino-acid chain: Peptide chain release factor 3 (523 aa).

In terms of domain architecture, tr-type G spans 10–277 (EKRRTFAIIS…SFVDLAPAPE (268 aa)). GTP contacts are provided by residues 19–26 (SHPDAGKT), 87–91 (DTPGH), and 141–144 (NKLD).

This sequence belongs to the TRAFAC class translation factor GTPase superfamily. Classic translation factor GTPase family. PrfC subfamily.

It is found in the cytoplasm. Its function is as follows. Increases the formation of ribosomal termination complexes and stimulates activities of RF-1 and RF-2. It binds guanine nucleotides and has strong preference for UGA stop codons. It may interact directly with the ribosome. The stimulation of RF-1 and RF-2 is significantly reduced by GTP and GDP, but not by GMP. The polypeptide is Peptide chain release factor 3 (Lactobacillus acidophilus (strain ATCC 700396 / NCK56 / N2 / NCFM)).